The primary structure comprises 556 residues: Potassium-transporting ATPase potassium-binding subunit (556 aa).

The next 10 helical transmembrane spans lie at methionine 1–glutamine 21, serine 60–glutamine 80, glycine 130–isoleucine 150, leucine 173–valine 193, proline 245–proline 265, isoleucine 281–phenylalanine 301, glycine 374–glycine 394, isoleucine 416–leucine 436, alanine 482–leucine 502, and leucine 529–glycine 549.

The protein belongs to the KdpA family. In terms of assembly, the system is composed of three essential subunits: KdpA, KdpB and KdpC.

The protein localises to the cell membrane. Part of the high-affinity ATP-driven potassium transport (or Kdp) system, which catalyzes the hydrolysis of ATP coupled with the electrogenic transport of potassium into the cytoplasm. This subunit binds the extracellular potassium ions and delivers the ions to the membrane domain of KdpB through an intramembrane tunnel. In Cutibacterium acnes (strain DSM 16379 / KPA171202) (Propionibacterium acnes), this protein is Potassium-transporting ATPase potassium-binding subunit.